Consider the following 435-residue polypeptide: MVNVVLGAQWGDEGKGKLVDLLVGKYDLVARCAGGNNAGHTIVVDGVKYDFHMLPSGLVNPKSLNLLGNGVVIHVPSFFKELEDLETKGLNDARERLFISSRAHLVFDFHQRTDKLRELELSGASTDGKNIGTTGKGIGPTYATKASRSGIRVHHLVNDNPESWTVFENMYRRLLETRKKRYGDFEYDAEGELARFKKYKEDLKPFVVDSVVFMHKAIEAKKKILVEGANALMLDIDFGTYPFVTSSNTGIAGVISGLGIPPKVIDECYGVVKAYTTRVGEGPFPTEQLNEDGEKLQEIGAEYGVTTGRKRRCGWLDLVIMKYSTLINGYTSLNITKLDVLDTFKEIPIGIGYYYKGQKLDLFPEDLIKLGKVEVEYKVLPGWQQDITKVTKYDDLPENAKKYIKFIEDFVGVPVEWVGTGPSRDNMVHKEIQRI.

GTP contacts are provided by residues Gly11–Lys17 and Gly39–Thr41. Catalysis depends on Asp12, which acts as the Proton acceptor. Residues Asp12 and Gly39 each coordinate Mg(2+). Residues Asp12–Lys15, Asn37–His40, Thr134, Arg148, Asn230, Thr245, and Arg309 contribute to the IMP site. His40 (proton donor) is an active-site residue. Val305–Arg311 serves as a coordination point for substrate. GTP is bound by residues Arg311, Lys337 to Asp339, and Gly419 to Gly421.

This sequence belongs to the adenylosuccinate synthetase family. In terms of assembly, homodimer. Mg(2+) serves as cofactor.

Its subcellular location is the cytoplasm. The catalysed reaction is IMP + L-aspartate + GTP = N(6)-(1,2-dicarboxyethyl)-AMP + GDP + phosphate + 2 H(+). The protein operates within purine metabolism; AMP biosynthesis via de novo pathway; AMP from IMP: step 1/2. In terms of biological role, plays an important role in the de novo pathway and in the salvage pathway of purine nucleotide biosynthesis. Catalyzes the first committed step in the biosynthesis of AMP from IMP. In Zygosaccharomyces rouxii (strain ATCC 2623 / CBS 732 / NBRC 1130 / NCYC 568 / NRRL Y-229), this protein is Adenylosuccinate synthetase.